The following is a 333-amino-acid chain: Beta-ketoacyl-[acyl-carrier-protein] synthase III (333 aa).

Active-site residues include cysteine 114 and histidine 255. The interval 256 to 260 (QANYR) is ACP-binding. The active site involves asparagine 285.

The protein belongs to the thiolase-like superfamily. FabH family. In terms of assembly, homodimer.

The protein resides in the cytoplasm. It catalyses the reaction malonyl-[ACP] + acetyl-CoA + H(+) = 3-oxobutanoyl-[ACP] + CO2 + CoA. The protein operates within lipid metabolism; fatty acid biosynthesis. Functionally, catalyzes the condensation reaction of fatty acid synthesis by the addition to an acyl acceptor of two carbons from malonyl-ACP. Catalyzes the first condensation reaction which initiates fatty acid synthesis and may therefore play a role in governing the total rate of fatty acid production. Possesses both acetoacetyl-ACP synthase and acetyl transacylase activities. Its substrate specificity determines the biosynthesis of branched-chain and/or straight-chain of fatty acids. In Aliarcobacter butzleri (strain RM4018) (Arcobacter butzleri), this protein is Beta-ketoacyl-[acyl-carrier-protein] synthase III.